A 222-amino-acid polypeptide reads, in one-letter code: Phosphatidylinositol phosphate synthase (222 aa).

31 to 34 (DIVT) is a binding site for a CDP-1,2-diacyl-sn-glycerol. Helical transmembrane passes span 32–49 (IVTL…LTLF) and 55–74 (WWGA…DGAM). 2 residues coordinate Mg(2+): Asp-68 and Asp-71. A CDP-1,2-diacyl-sn-glycerol is bound by residues Gly-72, Arg-76, and Thr-82. Mg(2+)-binding residues include Asp-89 and Asp-93. The Proton acceptor role is filled by Asp-93. Transmembrane regions (helical) follow at residues 95–112 (LGDG…AFGL), 118–136 (VVAT…YIKA), 156–173 (LVIV…FFPL), and 179–196 (VAMW…LQRV).

Belongs to the CDP-alcohol phosphatidyltransferase class-I family. Homodimer. Mg(2+) is required as a cofactor.

Its subcellular location is the cell membrane. It localises to the secreted. The protein resides in the cell wall. The enzyme catalyses a CDP-1,2-diacyl-sn-glycerol + 1D-myo-inositol 3-phosphate = a 1,2-diacyl-sn-glycero-3-phospho-(1D-myo-inositol-3-phosphate) + CMP + H(+). It carries out the reaction 1,2-di-(9Z-octadecenoyl)-sn-glycero-3-cytidine-5'-diphosphate + 1D-myo-inositol 3-phosphate = 1,2-di-(9Z-octadecenoyl)-sn-glycero-3-phospho-(1D-myo-inositol-3-phosphate) + CMP + H(+). The catalysed reaction is 1,2-dihexadecanoyl-sn-glycero-3-CDP + 1D-myo-inositol 3-phosphate = 1,2-dihexadecanoyl-sn-glycero-3-phospho-(1D-myo-inositol-3-phosphate) + CMP + H(+). It functions in the pathway phospholipid metabolism; phosphatidylinositol phosphate biosynthesis. With respect to regulation, competitively inhibited by several inositol 1-phosphate analogs, including the phosphonate analog 1-deoxy-1-phosphonomethyl-myo-inositol (Ino-C-P). This leads to inhibition of M.smegmatis growth. Catalyzes the conjugation of the 1'-hydroxyl group of D-myo-inositol-3-phosphate (also named L-myo-inositol-1-phosphate) with a lipid tail of cytidine diphosphate diacylglycerol (CDP-DAG), forming phosphatidylinositol phosphate (PIP) and CMP. PIP is a precursor of phosphatidylinositol (PI) which is an essential lipid for mycobacteria required for formation of their cell wall. Is essential to the survival of M.smegmatis. This is Phosphatidylinositol phosphate synthase from Mycolicibacterium smegmatis (strain ATCC 700084 / mc(2)155) (Mycobacterium smegmatis).